We begin with the raw amino-acid sequence, 133 residues long: Small ribosomal subunit protein uS8 (133 aa).

Belongs to the universal ribosomal protein uS8 family. Part of the 30S ribosomal subunit. Contacts proteins S5 and S12.

One of the primary rRNA binding proteins, it binds directly to 16S rRNA central domain where it helps coordinate assembly of the platform of the 30S subunit. This Prochlorococcus marinus (strain AS9601) protein is Small ribosomal subunit protein uS8.